A 703-amino-acid polypeptide reads, in one-letter code: Methionine--tRNA ligase (703 aa).

Positions 12 to 22 (PYANGPLHIGH) match the 'HIGH' region motif. Zn(2+) contacts are provided by C143, C146, C156, and C159. A 'KMSKS' region motif is present at residues 331–335 (KMSKT). K334 provides a ligand contact to ATP. 2 stretches are compositionally biased toward low complexity: residues 556–568 (AAPQ…PAKG) and 577–594 (EAPA…AAES). 2 disordered regions span residues 556–594 (AAPQ…AAES) and 682–703 (GPGG…SEVK). Residues 602-703 (DFAKVVLKAG…GDVAPGSEVK (102 aa)) form the tRNA-binding domain.

It belongs to the class-I aminoacyl-tRNA synthetase family. MetG type 1 subfamily. In terms of assembly, homodimer. Zn(2+) serves as cofactor.

The protein resides in the cytoplasm. The catalysed reaction is tRNA(Met) + L-methionine + ATP = L-methionyl-tRNA(Met) + AMP + diphosphate. In terms of biological role, is required not only for elongation of protein synthesis but also for the initiation of all mRNA translation through initiator tRNA(fMet) aminoacylation. The polypeptide is Methionine--tRNA ligase (Myxococcus xanthus (strain DK1622)).